The chain runs to 193 residues: Xanthine phosphoribosyltransferase (193 aa).

Xanthine is bound by residues leucine 20 and threonine 27. 5-phospho-alpha-D-ribose 1-diphosphate is bound at residue 128 to 132; it reads ANGQA. Lysine 156 contacts xanthine.

Belongs to the purine/pyrimidine phosphoribosyltransferase family. Xpt subfamily. Homodimer.

It localises to the cytoplasm. The enzyme catalyses XMP + diphosphate = xanthine + 5-phospho-alpha-D-ribose 1-diphosphate. It functions in the pathway purine metabolism; XMP biosynthesis via salvage pathway; XMP from xanthine: step 1/1. Functionally, converts the preformed base xanthine, a product of nucleic acid breakdown, to xanthosine 5'-monophosphate (XMP), so it can be reused for RNA or DNA synthesis. This chain is Xanthine phosphoribosyltransferase, found in Streptococcus equi subsp. zooepidemicus (strain H70).